We begin with the raw amino-acid sequence, 1035 residues long: Sialidase A (1035 aa).

Residues 1–53 form the signal peptide; that stretch reads MSYFRNRDIDIERNSMNRSVQERKCRYSIRKLSVGAVSMIVGAVVFGTSPVLA. The disordered stretch occupies residues 57–112; it reads ASEQPLANETQLSGESSTLTDTEKSQPSSETELSGNKQEQERKDKQEEKIPRDYYA. Residues 61-92 show a composition bias toward polar residues; it reads PLANETQLSGESSTLTDTEKSQPSSETELSGN. A compositionally biased stretch (basic and acidic residues) spans 94 to 112; sequence QEQERKDKQEEKIPRDYYA. Residue R347 participates in substrate binding. The active-site Proton acceptor is D372. BNR repeat units lie at residues 381-392, 539-550, and 607-618; these read RRSEDNGKTWGD, SYSDDDGKTWSA, and IYSDDHGKTWHA. The active site involves E647. R663 contacts substrate. Residues 672-683 form a BNR 4 repeat; the sequence is ATSKDGGVTWEK. Residues 902 to 951 are disordered; the sequence is GPLGTSGEEPAPTVEKPEYTGPLGTSGEEPAPTVEKPEYTGPLGTAGEEA. The short motif at 1003–1007 is the LPXTG sorting signal element; that stretch reads LPETG. The residue at position 1006 (T1006) is a Pentaglycyl murein peptidoglycan amidated threonine. A propeptide spans 1007-1035 (removed by sortase); it reads GNKESDLLASLGLTAFFLGLFTLGKKREQ.

Belongs to the glycosyl hydrolase 33 family.

The protein localises to the secreted. The protein resides in the cell wall. It catalyses the reaction Hydrolysis of alpha-(2-&gt;3)-, alpha-(2-&gt;6)-, alpha-(2-&gt;8)- glycosidic linkages of terminal sialic acid residues in oligosaccharides, glycoproteins, glycolipids, colominic acid and synthetic substrates.. The chain is Sialidase A (nanA) from Streptococcus pneumoniae.